The chain runs to 115 residues: Large ribosomal subunit protein P2 (115 aa).

At M1 the chain carries N-acetylmethionine. S19 carries the phosphoserine modification. K21 carries the N6-acetyllysine; alternate modification. An N6-succinyllysine; alternate modification is found at K21. Over residues 76–90 (APGSAAPAAGSAPAA) the composition is skewed to low complexity. A disordered region spans residues 76–115 (APGSAAPAAGSAPAAAEEKKDEKKEESEESDDDMGFGLFD). A phosphoserine mark is found at S79 and S86. Residues 91 to 101 (AEEKKDEKKEE) are compositionally biased toward basic and acidic residues. S102 and S105 each carry phosphoserine.

This sequence belongs to the eukaryotic ribosomal protein P1/P2 family. Heterodimer with RPLP1 at the lateral ribosomal stalk of the large ribosomal subunit.

Functionally, plays an important role in the elongation step of protein synthesis. This is Large ribosomal subunit protein P2 (Rplp2) from Rattus norvegicus (Rat).